The following is a 174-amino-acid chain: UPF0398 protein LACR_0544 (174 aa).

Belongs to the UPF0398 family.

The protein is UPF0398 protein LACR_0544 of Lactococcus lactis subsp. cremoris (strain SK11).